The primary structure comprises 120 residues: Small ribosomal subunit protein bS6 (120 aa).

The span at 97-112 shows a compositional bias: polar residues; sequence SNEPSPILKNQSTENT. Residues 97-120 form a disordered region; that stretch reads SNEPSPILKNQSTENTPVIDVTAN.

The protein belongs to the bacterial ribosomal protein bS6 family.

Its function is as follows. Binds together with bS18 to 16S ribosomal RNA. The polypeptide is Small ribosomal subunit protein bS6 (Rickettsia bellii (strain OSU 85-389)).